Reading from the N-terminus, the 92-residue chain is PqqA binding protein (92 aa).

The protein belongs to the PqqD family. Monomer. Interacts with PqqE.

The protein operates within cofactor biosynthesis; pyrroloquinoline quinone biosynthesis. In terms of biological role, functions as a PqqA binding protein and presents PqqA to PqqE, in the pyrroloquinoline quinone (PQQ) biosynthetic pathway. This chain is PqqA binding protein, found in Xanthomonas oryzae pv. oryzae (strain MAFF 311018).